Here is a 402-residue protein sequence, read N- to C-terminus: Multidrug resistance protein MdtH (402 aa).

The Cytoplasmic portion of the chain corresponds to 1–12 (MSRVSQARNLGK). Residues 13 to 33 (YFLLIDNMLVVLGFFVVFPLI) form a helical membrane-spanning segment. Topologically, residues 34–98 (SIRFVDQMGW…GFATMGIAHE (65 aa)) are periplasmic. The helical transmembrane segment at 99–116 (PWLLWFSCFLSGLGGTLF) threads the bilayer. At 117-138 (DPPRSALVVKLIRPEQRGRFFS) the chain is on the cytoplasmic side. A helical membrane pass occupies residues 139-159 (LLMMQDSAGAVIGALLGSWLL). At 160-164 (QYDFR) the chain is on the periplasmic side. The chain crosses the membrane as a helical span at residues 165–185 (LVCATGAILFILCALFNAWLL). Residues 186-213 (PAWKLSTVRTPVREGMRRVMSDKRFVTY) lie on the Cytoplasmic side of the membrane. A helical membrane pass occupies residues 214–234 (VLTLAGYYMLAVQVMLMLPIM). The Periplasmic segment spans residues 235 to 243 (VNDIAGSPA). The chain crosses the membrane as a helical span at residues 244–264 (AVKWMYAIEACLSLTLLYPIA). The Cytoplasmic portion of the chain corresponds to 265–276 (RWSEKRFRLEHR). The chain crosses the membrane as a helical span at residues 277-297 (LMAGLLVMSLSMLPIGMVGNL). The Periplasmic portion of the chain corresponds to 298-299 (QQ). Residues 300–320 (LFTLICAFYIGSVIAEPARET) traverse the membrane as a helical segment. Over 321-339 (LSASLADARARGSYMGFSR) the chain is Cytoplasmic. The helical transmembrane segment at 340 to 360 (LGLAIGGAIGYIGGGWLFDMG) threads the bilayer. Residues 361–367 (KALAQPE) lie on the Periplasmic side of the membrane. The helical transmembrane segment at 368–388 (LPWMMLGIIGFITFLALGWQF) threads the bilayer. Over 389–402 (SHKRTPRRMLEPGA) the chain is Cytoplasmic.

Belongs to the major facilitator superfamily. DHA1 family. MdtH (TC 2.A.1.2.21) subfamily.

Its subcellular location is the cell inner membrane. The polypeptide is Multidrug resistance protein MdtH (Salmonella agona (strain SL483)).